A 615-amino-acid chain; its full sequence is DNA mismatch repair protein MutL (615 aa).

The tract at residues 363–397 is disordered; the sequence is FAEPAAREPVAPRYTPAPASGSRPAAPWPNAQPGY. Residues 364 to 391 show a composition bias toward low complexity; the sequence is AEPAAREPVAPRYTPAPASGSRPAAPWP.

The protein belongs to the DNA mismatch repair MutL/HexB family.

This protein is involved in the repair of mismatches in DNA. It is required for dam-dependent methyl-directed DNA mismatch repair. May act as a 'molecular matchmaker', a protein that promotes the formation of a stable complex between two or more DNA-binding proteins in an ATP-dependent manner without itself being part of a final effector complex. The polypeptide is DNA mismatch repair protein MutL (Shigella boydii serotype 18 (strain CDC 3083-94 / BS512)).